The following is a 57-amino-acid chain: Protein YnaL (57 aa).

Residues 7–57 are disordered; the sequence is LQIPVPEPIPGDPVPVPDPIPRPQPMPDPPPDEEPIKLSHRERRSARIRAC. Positions 11–35 are enriched in pro residues; it reads VPEPIPGDPVPVPDPIPRPQPMPDP. A compositionally biased stretch (basic residues) spans 46-57; it reads HRERRSARIRAC.

The protein is Protein YnaL of Escherichia coli (strain K12).